A 391-amino-acid chain; its full sequence is Choline/ethanolaminephosphotransferase 1 (391 aa).

Residues 1–49 lie on the Lumenal side of the membrane; sequence MGYFVPDSHIENLKSYKYQSEDRSLVSKYFLKPFWQRFCHIFPTWMAPN. Residues 50–69 traverse the membrane as a helical segment; that stretch reads IITLSGFAFIVINVLTVFYY. Residues 70–172 are Cytoplasmic-facing; sequence DPNLNTDTPR…YHTHTLYLSE (103 aa). A helical membrane pass occupies residues 173–193; that stretch reads FSGPVEGILIVCVSLILTGIY. The Lumenal segment spans residues 194–211; sequence GKQVIWHTYLFTITVGDK. A helical transmembrane segment spans residues 212–232; it reads VIDVDTLDIVFSLAVFGLVMN. The Cytoplasmic portion of the chain corresponds to 233–264; it reads ALSAKRNVDKYYRNSTSSANNITQIEQDSAIK. A helical membrane pass occupies residues 265–282; sequence GLLPFFAYYASIALLVWM. The Lumenal portion of the chain corresponds to 283–285; it reads QPS. A helical membrane pass occupies residues 286-308; that stretch reads FITLSFILSVGFTGAFTVGRIIV. Residues 309–321 are Cytoplasmic-facing; that stretch reads CHLTKQSFPMFNA. The helical transmembrane segment at 322–342 threads the bilayer; sequence PMLIPLCQIVLYKICLSLWGI. At 343–346 the chain is on the lumenal side; that stretch reads ESNK. A helical membrane pass occupies residues 347-367; that stretch reads IVFALSWLGFGLSLGVHIMFM. At 368–391 the chain is on the cytoplasmic side; it reads NDIIHEFTEYLDVYALSIKRSKLT.

It belongs to the CDP-alcohol phosphatidyltransferase class-I family. Requires Mg(2+) as cofactor.

Its subcellular location is the golgi apparatus membrane. The enzyme catalyses CDP-ethanolamine + a 1,2-diacyl-sn-glycerol = a 1,2-diacyl-sn-glycero-3-phosphoethanolamine + CMP + H(+). The catalysed reaction is CDP-choline + a 1,2-diacyl-sn-glycerol = a 1,2-diacyl-sn-glycero-3-phosphocholine + CMP + H(+). It catalyses the reaction CDP-N-methylethanolamine + a 1,2-diacyl-sn-glycerol = a 1,2-diacyl-sn-glycero-3-phospho-N-methylethanolamine + CMP + H(+). It carries out the reaction CDP-N,N-dimethylethanolamine + a 1,2-diacyl-sn-glycerol = a 1,2-diacyl-sn-glycero-3-phospho-N,N-dimethylethanolamine + CMP + H(+). The enzyme catalyses 1,2-di-(9Z-octadecenoyl)-glycerol + CDP-choline = 1,2-di-(9Z-octadecenoyl)-sn-glycero-3-phosphocholine + CMP + H(+). The catalysed reaction is 1,2-di-(9Z-octadecenoyl)-glycerol + CDP-ethanolamine = 1,2-di-(9Z-octadecenoyl)-sn-glycero-3-phosphoethanolamine + CMP + H(+). Its pathway is phospholipid metabolism; phosphatidylethanolamine biosynthesis; phosphatidylethanolamine from ethanolamine: step 3/3. It functions in the pathway phospholipid metabolism; phosphatidylcholine biosynthesis; phosphatidylcholine from phosphocholine: step 2/2. With respect to regulation, requires a divalent cation activator, and is inhibited by CMP. Activated by phospholipids, especially phosphatidylcholine. Catalyzes the final step in the CDP-ethanolamine route leading to phosphatidylethanolamine (PE). Can also catalyze the formation of phosphatidylcholine (PC) from CDP-choline, but does not substantially contribute to PC biosynthesis. Preferentially uses CDP-dimethylethanolamine and CDP-propanolamine as aminoalcohol substrates. Shows highest activity toward di-unsaturated diacylglycerol species as lipid substrates. The CDP-ethanolamine pathway may play a role in maintaining the proper PE species distribution. The chain is Choline/ethanolaminephosphotransferase 1 (EPT1) from Saccharomyces cerevisiae (strain ATCC 204508 / S288c) (Baker's yeast).